A 341-amino-acid chain; its full sequence is Antihemorrhagic factor BJ46a (341 aa).

The first 19 residues, 1–19 (MNSLVALVLLGQIIGSTLS), serve as a signal peptide directing secretion. Cystatin fetuin-A-type domains are found at residues 22-130 (VRGD…AKCH) and 141-254 (RNCP…SDCV). The short motif at 23 to 25 (RGD) is the Cell attachment site element. 6 cysteine pairs are disulfide-bonded: Cys28–Cys332, Cys85–Cys96, Cys110–Cys129, Cys143–Cys146, Cys205–Cys217, and Cys230–Cys253. N-linked (GlcNAc...) asparagine glycosylation is present at Asn95. N-linked (GlcNAc...) asparagine glycosylation is present at Asn204. N-linked (GlcNAc...) asparagine glycosylation is found at Asn282 and Asn293.

Homodimer. As to expression, expressed by the liver.

It is found in the secreted. Its function is as follows. Potent inhibitor of hemorrhagic activity but also proteolytic activities of atrolysin C and jararhagin. Inhibition occurs by formation of a non-covalent complex between BJ46a and the proteinases at their metalloproteinase domains. In Bothrops jararaca (Jararaca), this protein is Antihemorrhagic factor BJ46a.